The sequence spans 550 residues: Hydroxylamine reductase (550 aa).

[2Fe-2S] cluster contacts are provided by Cys4, Cys7, Cys19, and Cys26. His249, Glu273, Cys317, Cys405, Cys433, Cys458, Glu492, and Lys494 together coordinate hybrid [4Fe-2O-2S] cluster. Cys405 bears the Cysteine persulfide mark.

It belongs to the HCP family. [2Fe-2S] cluster is required as a cofactor. Requires hybrid [4Fe-2O-2S] cluster as cofactor.

It is found in the cytoplasm. The enzyme catalyses A + NH4(+) + H2O = hydroxylamine + AH2 + H(+). Its function is as follows. Catalyzes the reduction of hydroxylamine to form NH(3) and H(2)O. The sequence is that of Hydroxylamine reductase from Aeromonas salmonicida (strain A449).